A 510-amino-acid polypeptide reads, in one-letter code: Histidine ammonia-lyase (510 aa).

A cross-link (5-imidazolinone (Ala-Gly)) is located at residues 143-145 (ASG). Ser144 carries the post-translational modification 2,3-didehydroalanine (Ser).

The protein belongs to the PAL/histidase family. In terms of processing, contains an active site 4-methylidene-imidazol-5-one (MIO), which is formed autocatalytically by cyclization and dehydration of residues Ala-Ser-Gly.

The protein localises to the cytoplasm. It catalyses the reaction L-histidine = trans-urocanate + NH4(+). The protein operates within amino-acid degradation; L-histidine degradation into L-glutamate; N-formimidoyl-L-glutamate from L-histidine: step 1/3. This Shewanella woodyi (strain ATCC 51908 / MS32) protein is Histidine ammonia-lyase.